We begin with the raw amino-acid sequence, 29 residues long: Trypsin inhibitor 1 (29 aa).

3 disulfide bridges follow: C3–C20, C10–C22, and C16–C28.

The protein belongs to the protease inhibitor I7 (squash-type serine protease inhibitor) family.

The protein resides in the secreted. In terms of biological role, inhibits trypsin. This Cucurbita maxima (Pumpkin) protein is Trypsin inhibitor 1.